A 969-amino-acid chain; its full sequence is Activity-dependent neuroprotective protein a (969 aa).

Residues 74–97 (FCCSDCPFASKYFSAYKNHFRNVH) form a C2H2-type 1 zinc finger. The C2H2-type 2; atypical zinc finger occupies 107–129 (LNCSYCTYSGNKRTLETHVRLFH). 2 consecutive C2H2-type zinc fingers follow at residues 169 to 192 (YYCKKCTYRDRLYNVVRRHIYREH) and 221 to 244 (IHCKSCHFTPRSYEALVQHVIEFH). The segment at 401 to 423 (KICTICNELFPESAYSAHFEKEH) adopts a C2H2-type 5; atypical zinc-finger fold. The segment at 443 to 464 (SKCLYCNRYLPSDSLLNHMLVH) adopts a C2H2-type 6; atypical zinc-finger fold. The C2H2-type 7 zinc-finger motif lies at 466 to 489 (LSCPHCHSTFHEVEKIVAHNRLAH). A C2H2-type 8; atypical zinc finger spans residues 583–608 (TLCPLCFTILKGPISDALAHHLRDSH). The C2H2-type 9; atypical zinc finger occupies 623–647 (YKCIHCLGVYTSNMTASTITLHLVH). The segment at 659–689 (KPITTGLRSPGAGSLKRELVTPDPSDPKRRK) is disordered. A DNA-binding region (homeobox) is located at residues 732–774 (AYFNRHPYPSQREVEKLAASLWLWKSDVASHFGNHRRLCDRDF). Residues 911–949 (DVRANRSSPRVGPKVLDGSVSSSSPDEATWSGNMSSEES) are disordered. Residues 929–946 (SVSSSSPDEATWSGNMSS) are compositionally biased toward polar residues.

As to quaternary structure, interacts with catenin beta-1/ctnnb1.

The protein resides in the nucleus. Its function is as follows. May be involved in transcriptional regulation. Positively modulates wnt-beta-catenin/ctnnb1 signaling. Required for embryonic neurogenesis. Required for progression through late erythroid differentiation. This chain is Activity-dependent neuroprotective protein a, found in Danio rerio (Zebrafish).